We begin with the raw amino-acid sequence, 403 residues long: MKTIDELLSEGVAGKRVFVRADLNVPLDGTTITDDGRIRAVVPTVKALADAGARVIVASHLGRPKGAPDPAFSLAPAAARLGELLGADVAFAEDTVGSSAEAVVTGLADGGVAVIENLRFNAGETSKDDAERAAFADKLAGLADVYVGDGFGAVHRKHASVFDLPKRLPHYAGYLIATEVGVLKKLTDEVKRPYVVALGGAKVSDKLAVIDQLLGKADRLLIGGGMAYTFLKAKGYEVGISLLQEDQIPAVKEYIERAEKNGVELVLPVDVLVAPEFPDLKTKAPANPTTVAADAIPADQEGLDIGPETRKLYASKLADAGTVFWNGPMGVFEHPDYAEGTKAVAQALVDAPGFTVVGGGDSAAAVRTLGFDENAFGHISTGGGASLEYLEGKTLPGLAALED.

Substrate-binding positions include 22–24 (DLN), Arg37, 60–63 (HLGR), Arg119, and Arg156. ATP is bound by residues Lys206, Gly302, Glu333, and 359–362 (GGDS).

This sequence belongs to the phosphoglycerate kinase family. Monomer.

The protein localises to the cytoplasm. It carries out the reaction (2R)-3-phosphoglycerate + ATP = (2R)-3-phospho-glyceroyl phosphate + ADP. It participates in carbohydrate degradation; glycolysis; pyruvate from D-glyceraldehyde 3-phosphate: step 2/5. The protein is Phosphoglycerate kinase (pgk) of Streptomyces coelicolor (strain ATCC BAA-471 / A3(2) / M145).